The chain runs to 242 residues: MLTRKIKLWDINAHITCRLCSGYLIDATTVTECLHTFCRSCLVKYLEENNTCPTCRIVIHQSHPLQYIGHDRTMQDIVYKLVPGLQEAEMRKQREFYHKLGLEVPGDIKGETCSAKQHLDPHRNGETKADDSSNKEAAEEKQEEDGDYHRSDEQVSICLECNSSKLRGLKRKWIRCSAQATVLHLKKFIAKKLNLSSFNELDILCNEEILGKDHTLKFVVVTRWRFKKAPLLLHYRPKMDLL.

The RING-type zinc-finger motif lies at 17–56 (CRLCSGYLIDATTVTECLHTFCRSCLVKYLEENNTCPTCR). The tract at residues 115 to 149 (AKQHLDPHRNGETKADDSSNKEAAEEKQEEDGDYH) is disordered. Over residues 117-140 (QHLDPHRNGETKADDSSNKEAAEE) the composition is skewed to basic and acidic residues. The tract at residues 132–242 (SSNKEAAEEK…LHYRPKMDLL (111 aa)) is interaction with BCORL1.

As to quaternary structure, component of a PRC1-like complex that contains PCGF3, RNF2 and RYBP. Interacts with CBX6, CBX7 and CBX8. Interacts with BCORL1.

The protein resides in the nucleus. Its subcellular location is the nucleoplasm. Its function is as follows. Component of a Polycomb group (PcG) multiprotein PRC1-like complex, a complex class required to maintain the transcriptionally repressive state of many genes, including Hox genes, throughout development. PcG PRC1 complex acts via chromatin remodeling and modification of histones; it mediates monoubiquitination of histone H2A 'Lys-119', rendering chromatin heritably changed in its expressibility. Within the PRC1-like complex, regulates RNF2 ubiquitin ligase activity. Plays a redundant role with PCGF5 as part of a PRC1-like complex that mediates monoubiquitination of histone H2A 'Lys-119' on the X chromosome and is required for normal silencing of one copy of the X chromosome in XX females. The chain is Polycomb group RING finger protein 3 (PCGF3) from Bos taurus (Bovine).